Consider the following 146-residue polypeptide: Large ribosomal subunit protein bL21 (146 aa).

Positions 103–146 are disordered; the sequence is DGKSPTIGPRPKKEKAVEPVEGASDDKPRRAAKKTAAKTAEDAD. Over residues 116 to 131 the composition is skewed to basic and acidic residues; it reads EKAVEPVEGASDDKPR.

Belongs to the bacterial ribosomal protein bL21 family. Part of the 50S ribosomal subunit. Contacts protein L20.

Its function is as follows. This protein binds to 23S rRNA in the presence of protein L20. The protein is Large ribosomal subunit protein bL21 of Nitrobacter winogradskyi (strain ATCC 25391 / DSM 10237 / CIP 104748 / NCIMB 11846 / Nb-255).